The primary structure comprises 283 residues: Shikimate kinase (283 aa).

86 to 96 (PIKSGLSSSSA) serves as a coordination point for ATP.

Belongs to the GHMP kinase family. Archaeal shikimate kinase subfamily.

The protein resides in the cytoplasm. It carries out the reaction shikimate + ATP = 3-phosphoshikimate + ADP + H(+). The protein operates within metabolic intermediate biosynthesis; chorismate biosynthesis; chorismate from D-erythrose 4-phosphate and phosphoenolpyruvate: step 5/7. The chain is Shikimate kinase from Methanococcus maripaludis (strain C6 / ATCC BAA-1332).